Consider the following 1977-residue polypeptide: Echinoderm microtubule-associated protein-like 5 (1977 aa).

WD repeat units lie at residues 59 to 100 (GHSD…TVSV), 104 to 145 (VHTH…MLSM), 148 to 187 (GHTD…LTPK), 195 to 233 (GDLQ…RTIQ), 235 to 273 (AHTA…TVID), 280 to 321 (GYKG…LIMQ), 323 to 362 (HCEG…LIAR), 364 to 403 (NMDE…EVVH), 406 to 445 (DRKE…KKVG), 449 to 488 (GSLS…EVTS), and 561 to 601 (GHSA…KLKD). Residues 609-629 (ESLTESNSDESDSDLSDVPEL) are disordered. The span at 615-629 (NSDESDSDLSDVPEL) shows a compositional bias: acidic residues. WD repeat units lie at residues 725 to 766 (GHDD…PLSI), 770 to 811 (YHQY…KLSV), 814 to 853 (GSKD…LIGR), 861 to 900 (GKND…KTVK), 901 to 940 (AHDG…KTYA), 996 to 1035 (HMEG…CMLA), 1038 to 1077 (KLKK…DLVS), 1080 to 1120 (HRKD…RVGV), and 1236 to 1276 (AHST…HREK). 2 disordered regions span residues 1274 to 1299 (REKK…SDVT) and 1323 to 1363 (PHLQ…NVGK). Residues 1281-1294 (SEESDTDSEEDGGY) are compositionally biased toward acidic residues. Over residues 1326-1337 (QQKEPSVDERQG) the composition is skewed to basic and acidic residues. WD repeat units lie at residues 1420–1471 (EHND…TLSI), 1475–1516 (SHSK…KIAS), 1519–1558 (GHNQ…LLSK), 1568–1606 (ARMQ…RVVA), 1608–1654 (AHNG…RAFR), 1699–1739 (GHVD…MLNK), 1741–1782 (NLGH…GKKR), 1783–1822 (DRRC…TLNR), 1895–1934 (AEKA…KFAK), and 1940–1977 (GHSP…HTPH).

The protein belongs to the WD repeat EMAP family. In terms of tissue distribution, highly expressed in brain, especially in hippocampus, cerebellum and olfactory bulb (at protein level).

It is found in the cytoplasm. Its subcellular location is the cytoskeleton. In terms of biological role, may modify the assembly dynamics of microtubules, such that microtubules are slightly longer, but more dynamic. In Rattus norvegicus (Rat), this protein is Echinoderm microtubule-associated protein-like 5 (Eml5).